The following is a 247-amino-acid chain: Proteasome subunit alpha (247 aa).

It belongs to the peptidase T1A family. The 20S proteasome core is composed of 14 alpha and 14 beta subunits that assemble into four stacked heptameric rings, resulting in a barrel-shaped structure. The two inner rings, each composed of seven catalytic beta subunits, are sandwiched by two outer rings, each composed of seven alpha subunits. The catalytic chamber with the active sites is on the inside of the barrel. Has a gated structure, the ends of the cylinder being occluded by the N-termini of the alpha-subunits. Is capped at one or both ends by the proteasome regulatory ATPase, PAN.

Its subcellular location is the cytoplasm. With respect to regulation, the formation of the proteasomal ATPase PAN-20S proteasome complex, via the docking of the C-termini of PAN into the intersubunit pockets in the alpha-rings, triggers opening of the gate for substrate entry. Interconversion between the open-gate and close-gate conformations leads to a dynamic regulation of the 20S proteasome proteolysis activity. Functionally, component of the proteasome core, a large protease complex with broad specificity involved in protein degradation. The polypeptide is Proteasome subunit alpha (Methanosarcina acetivorans (strain ATCC 35395 / DSM 2834 / JCM 12185 / C2A)).